Here is a 339-residue protein sequence, read N- to C-terminus: Tryptophan--tRNA ligase (339 aa).

ATP-binding positions include 11-13 (QPT) and 19-20 (GN). Positions 12 to 20 (PTGAIHIGN) match the 'HIGH' region motif. D135 serves as a coordination point for L-tryptophan. Residues 147–149 (GED), I191, and 200–204 (KMSKS) each bind ATP. Residues 200–204 (KMSKS) carry the 'KMSKS' region motif.

Belongs to the class-I aminoacyl-tRNA synthetase family. As to quaternary structure, homodimer.

Its subcellular location is the cytoplasm. It carries out the reaction tRNA(Trp) + L-tryptophan + ATP = L-tryptophyl-tRNA(Trp) + AMP + diphosphate + H(+). Catalyzes the attachment of tryptophan to tRNA(Trp). The chain is Tryptophan--tRNA ligase from Prochlorococcus marinus (strain SARG / CCMP1375 / SS120).